Reading from the N-terminus, the 514-residue chain is MDLANHGLILLQQLNAQREFGFLCDCTVAIGDVYFKAHKSVLASFSNYFKMLFVHQTSECVRLKPTDIQPDIFSYLLHLMYTGKMAPQLIDPVRLEQGIKFLHAYPLIQEASLASQGAFSHPDQVFPLASSLYGIQIADHQLRQATKIASAPEKLGRDPRPQTSRISQEQVPEASQLSQLTSNLAQVNRTNMTPSDPLQTSLSPELVSTPVPPPPPGEETNLEASSSDEQPASLTIAHVKPSIMKRNGSFPKYYACHLCGRRFTLRSSLREHLQIHTGVPFTSSQQGESRVPLTLCSNAADLGKDAMEVPEAGMISDSELQHISDSPIIDGQQQSETPPPSDIADIDNLEQADQEREVKRRKYECTICGRKFIQKSHWREHMYIHTGKPFKCSTCDKSFCRANQAARHVCLNQSIDTYTMVDKQTLELCTFEEGSQMDNMLVQTNKPYKCNLCDKTFSTPNEVVKHSCQNQNSDVFALDEGRSILLGSGDSEVTEPDHPVLASIKKEQETVLLD.

In terms of domain architecture, BTB spans 24 to 89; sequence CDCTVAIGDV…MYTGKMAPQL (66 aa). Glycyl lysine isopeptide (Lys-Gly) (interchain with G-Cter in SUMO2) cross-links involve residues Lys147 and Lys154. The disordered stretch occupies residues 149-231; the sequence is ASAPEKLGRD…LEASSSDEQP (83 aa). 2 stretches are compositionally biased toward polar residues: residues 161–200 and 222–231; these read PQTSRISQEQVPEASQLSQLTSNLAQVNRTNMTPSDPLQT and LEASSSDEQP. The C2H2-type 1 zinc-finger motif lies at 254 to 276; the sequence is YACHLCGRRFTLRSSLREHLQIH. Ser341 is subject to Phosphoserine. Lys362 participates in a covalent cross-link: Glycyl lysine isopeptide (Lys-Gly) (interchain with G-Cter in SUMO2). The C2H2-type 2 zinc-finger motif lies at 363 to 385; sequence YECTICGRKFIQKSHWREHMYIH. Residues 390 to 410 form a C2H2-type 3; atypical zinc finger; sequence FKCSTCDKSFCRANQAARHVC. A C2H2-type 4; atypical zinc finger spans residues 448-468; the sequence is YKCNLCDKTFSTPNEVVKHSC. Glycyl lysine isopeptide (Lys-Gly) (interchain with G-Cter in SUMO2) cross-links involve residues Lys465, Lys505, and Lys506.

The protein resides in the nucleus. Functionally, may be involved in transcriptional regulation. In Homo sapiens (Human), this protein is Zinc finger and BTB domain-containing protein 2 (ZBTB2).